The primary structure comprises 150 residues: Urease accessory protein UreE (150 aa).

Belongs to the UreE family.

The protein resides in the cytoplasm. Functionally, involved in urease metallocenter assembly. Binds nickel. Probably functions as a nickel donor during metallocenter assembly. This Parasynechococcus marenigrum (strain WH8102) protein is Urease accessory protein UreE.